The primary structure comprises 206 residues: MTYIVGLTGGIGSGKSTIAHLFMALGVPVIDADVVARDIVTKGSELLSKIVDYFGEHILCENGELNRAKLRERIFRHPEDKVWLNQLLHPAIREEMLRQLQIQTYPYVLWVVPLLIENNLTAFCQRVLVVDVEPETQIQRAMQRDNNSIELIQHIMASQVDRQTRLQFADDVIQNDADLKGNLPVLKQKVLELHHQYLQLANAQNA.

The 201-residue stretch at 4 to 204 (IVGLTGGIGS…HQYLQLANAQ (201 aa)) folds into the DPCK domain. ATP is bound at residue 12–17 (GSGKST).

The protein belongs to the CoaE family.

It localises to the cytoplasm. The catalysed reaction is 3'-dephospho-CoA + ATP = ADP + CoA + H(+). It participates in cofactor biosynthesis; coenzyme A biosynthesis; CoA from (R)-pantothenate: step 5/5. Functionally, catalyzes the phosphorylation of the 3'-hydroxyl group of dephosphocoenzyme A to form coenzyme A. The protein is Dephospho-CoA kinase of Pasteurella multocida (strain Pm70).